Consider the following 52-residue polypeptide: Ribosome modulation factor (52 aa).

The protein belongs to the ribosome modulation factor family.

It is found in the cytoplasm. During stationary phase, converts 70S ribosomes to an inactive dimeric form (100S ribosomes). This Xenorhabdus nematophila (strain ATCC 19061 / DSM 3370 / CCUG 14189 / LMG 1036 / NCIMB 9965 / AN6) protein is Ribosome modulation factor.